A 74-amino-acid chain; its full sequence is Exodeoxyribonuclease 7 small subunit (74 aa).

The protein belongs to the XseB family. As to quaternary structure, heterooligomer composed of large and small subunits.

The protein resides in the cytoplasm. The catalysed reaction is Exonucleolytic cleavage in either 5'- to 3'- or 3'- to 5'-direction to yield nucleoside 5'-phosphates.. Its function is as follows. Bidirectionally degrades single-stranded DNA into large acid-insoluble oligonucleotides, which are then degraded further into small acid-soluble oligonucleotides. The protein is Exodeoxyribonuclease 7 small subunit of Clostridium botulinum (strain Eklund 17B / Type B).